Consider the following 431-residue polypeptide: Na(+)-translocating NADH-quinone reductase subunit F (431 aa).

Residues 10–30 form a helical membrane-spanning segment; that stretch reads IFVASAAFCSLGLILVAVILL. Positions 41–133 constitute a 2Fe-2S ferredoxin-type domain; it reads CKLKINNDDS…DLCLEVEERY (93 aa). Residues Cys76, Cys82, Cys85, and Cys117 each contribute to the [2Fe-2S] cluster site. In terms of domain architecture, FAD-binding FR-type spans 136–286; sequence ASSWEGTVVS…SGPYGESFMK (151 aa).

This sequence belongs to the NqrF family. Composed of six subunits; NqrA, NqrB, NqrC, NqrD, NqrE and NqrF. It depends on [2Fe-2S] cluster as a cofactor. FAD serves as cofactor.

It localises to the cell inner membrane. The enzyme catalyses a ubiquinone + n Na(+)(in) + NADH + H(+) = a ubiquinol + n Na(+)(out) + NAD(+). NQR complex catalyzes the reduction of ubiquinone-1 to ubiquinol by two successive reactions, coupled with the transport of Na(+) ions from the cytoplasm to the periplasm. The first step is catalyzed by NqrF, which accepts electrons from NADH and reduces ubiquinone-1 to ubisemiquinone by a one-electron transfer pathway. The sequence is that of Na(+)-translocating NADH-quinone reductase subunit F from Chlamydia trachomatis serovar A (strain ATCC VR-571B / DSM 19440 / HAR-13).